We begin with the raw amino-acid sequence, 523 residues long: Synaptotagmin-10 (523 aa).

The Vesicular portion of the chain corresponds to 1–55; that stretch reads MSFRKEDGVSSLCQKALHIITELCFAGQVEWDKCSGIFPADRSGQGGGGTDISVS. Residues 13-35 form a cysteine motif region; it reads CQKALHIITELCFAGQVEWDKCS. Residues 56 to 76 form a helical membrane-spanning segment; it reads LLAVVVSFCGLALLVVSLFVF. The Cytoplasmic portion of the chain corresponds to 77–523; that stretch reads WKLCWPCWKS…CSSPRPPSTP (447 aa). At Thr-136 the chain carries Phosphothreonine. C2 domains follow at residues 231 to 352 and 363 to 496; these read TCGK…TVWK and DLGE…THWH. 11 residues coordinate Ca(2+): Asp-262, Asp-268, Asp-320, Phe-321, Asp-322, Ser-325, Asp-328, Asp-394, Asp-400, Asp-454, and Asp-456.

It belongs to the synaptotagmin family. Homodimer; disulfide-linked via the cysteine motif. Can also form heterodimers with SYT3, SYT6, SYT7 and SYT9. The cofactor is Ca(2+). Highly expressed in the olfactory bulb.

It is found in the cytoplasmic vesicle. Its subcellular location is the secretory vesicle membrane. Functionally, ca(2+) sensor specifically required for the Ca(2+)-dependent exocytosis of secretory vesicles containing IGF1 in neurons of the olfactory bulb. Exocytosis of IGF1 is required for sensory perception of smell. Not involved in Ca(2+)-dependent synaptic vesicle exocytosis. Acts through Ca(2+) and phospholipid binding to the C2 domain: Ca(2+) induces binding of the C2-domains to phospholipid membranes and to assembled SNARE-complexes; both actions contribute to triggering exocytosis. The protein is Synaptotagmin-10 of Mus musculus (Mouse).